A 516-amino-acid chain; its full sequence is Melianol synthase CYP71BQ17 (516 aa).

The chain crosses the membrane as a helical span at residues 14–34; sequence MPHLPSLPVSLSFLLFFLMLV. C454 serves as a coordination point for heme.

The protein belongs to the cytochrome P450 family. Heme serves as cofactor. As to expression, mainly expressed in roots and, to a lesser extent, in stems and old leaves.

It localises to the membrane. The enzyme catalyses dihydroniloticin + 2 reduced [NADPH--hemoprotein reductase] + 2 O2 = melianol + 2 oxidized [NADPH--hemoprotein reductase] + 3 H2O + 2 H(+). The protein operates within secondary metabolite biosynthesis; terpenoid biosynthesis. Monooxygenase involved in the biosynthesis of quassinoids triterpene natural products such as ailanthone, chaparrinone, glaucarubinone and amarolide, allelopathic degraded triterpene lactones inhibiting the growth of other plants, and possessing antimalarial, antifeedant, insecticidal, anti-inflammatory and anticancer activities. Catalyzes the conversion of dihydroniloticin to the protolimonoid melianol. This is Melianol synthase CYP71BQ17 from Ailanthus altissima (Tree-of-heaven).